The sequence spans 890 residues: MDKGINLQNDKEPSPMAEGNPADFSAHTPMMQQYLALKAGYPDTLVFYRMGDFYELFWADAEKAARLLDITLTQRGQSAGQPVVMAGVPFHALENYLGRLIRMGESVAICEQVGEVGAAKGPVERKVVRVVTPGTLTDSELLPDKAESMLLAVHQAPRARCGLAWLSVTQGVVHLAECTHDEVGTWIARIGPSEVIYSAGVTERFEQQLQALRQGGVLSCPLSLRPDWQFDGALGARKLLEQLGAASLNAWDAQDLAHAHAASAALLSYAEHTQGRALTHIHAVRVQKNDELIALPPATRRNLELTRTLRGEDAPTLFSLLDTCMTGMGSRLLKTWLLEPRRDRTEARARLAATAELRGDHGGTGSWQALRAALRGVSDVERITARIALRQVRPRELVALCKTLHKAEQIAAEHRWQDPLLAGISGDLHAPPACGALLAGAILEEPSALVRDGGVIADGFDAELDELRGIQNHCDDFLLALETREKARTLIPNLRVQFNKVHGFYIEVTSSYLDRIPDDYRRRQTLKNAERFITPELKAFEDKALSAQERALAREKWLYEQVLDQLQQHVPALTRAAQAIAALDALCALAERSLTLGWCAPQFAAEPCIEIEGGRHPVVEARLAETSAGAFIPNHTRLNANTRMQIITGPNMGGKSTYMRQVALIVLLASMGSHVPAAHCRLGPIDAIHTRIGAADDLANAQSTFMMEMTEAAQILHAATPHSLVLMDEIGRGTSTFDGLALASGIATHLHDRTRAFTLFATHYFELTELAARHAHAVNVHVGATESGSDIVFLHEIQPGPASRSYGIHVARLAGVPAPVLNHARHALSALEERANEGETQVDLFAPPPESEAPGISPVEAALQGIHPDSLSPREALDALYQLKRLAQPG.

A compositionally biased stretch (basic and acidic residues) spans 1-13 (MDKGINLQNDKEP). The tract at residues 1-23 (MDKGINLQNDKEPSPMAEGNPAD) is disordered. 649–656 (GPNMGGKS) contributes to the ATP binding site.

Belongs to the DNA mismatch repair MutS family.

Its function is as follows. This protein is involved in the repair of mismatches in DNA. It is possible that it carries out the mismatch recognition step. This protein has a weak ATPase activity. The sequence is that of DNA mismatch repair protein MutS from Paracidovorax citrulli (strain AAC00-1) (Acidovorax citrulli).